The following is a 92-amino-acid chain: Small ribosomal subunit protein uS19 (92 aa).

The protein belongs to the universal ribosomal protein uS19 family.

Protein S19 forms a complex with S13 that binds strongly to the 16S ribosomal RNA. This chain is Small ribosomal subunit protein uS19, found in Cereibacter sphaeroides (strain ATCC 17029 / ATH 2.4.9) (Rhodobacter sphaeroides).